The sequence spans 727 residues: E3 SUMO-protein ligase pli1 (727 aa).

In terms of domain architecture, SAP spans Glu-18–Ile-52. Residues Tyr-108–Tyr-261 form the PINIT domain. The SP-RING-type zinc finger occupies Gln-290–Ser-371. The Zn(2+) site is built by Cys-321, His-323, Cys-344, and Cys-347. Ser-395 and Ser-396 each carry phosphoserine. 2 disordered regions span residues Glu-408–Ser-558 and Gln-706–Asp-727. 2 stretches are compositionally biased toward polar residues: residues Thr-417 to Ser-435 and Val-459 to Thr-494. A compositionally biased stretch (low complexity) spans Ser-546–Ser-558.

It belongs to the PIAS family. Interacts with hus5/ubc9.

The protein resides in the nucleus. The protein operates within protein modification; protein sumoylation. Functionally, acts as an E3 ligase mediating SUMO/Smt3 attachment to other proteins. Involved in the maintenance of the centromere and in telomere length. Regulates recombination, via extension sumoylation, particularly within the heterochromatin repeats. In Schizosaccharomyces pombe (strain 972 / ATCC 24843) (Fission yeast), this protein is E3 SUMO-protein ligase pli1 (pli1).